The primary structure comprises 3088 residues: Protein prune homolog 2 (3088 aa).

Methionine 1 carries the post-translational modification N-acetylmethionine. The short motif at 109-111 (GSS) is the DHH motif element. Disordered stretches follow at residues 433 to 468 (IRSSRSSKESSVFLSDDSPVGEGAGPHHTLLPGLDS), 490 to 628 (HFDL…EPAS), 673 to 759 (SSEQ…QGTN), 771 to 795 (SGRSPTAMPEPWGNPTDDGEPAAVA), 846 to 909 (SELL…PKTR), 952 to 1080 (SNLG…SSYD), 1192 to 1211 (SDEHTKDSAPSEHHTLNEKS), 1231 to 1371 (SFML…LVAS), 1413 to 1452 (RDVQTGMSADNLQPKDTHEKHLMSQRNSGETTETSDGMNF), 1472 to 1491 (LEPENVGGGPPHRVPRSLDF), 1515 to 1585 (VKGS…QESE), 1632 to 1698 (DSFS…EESI), 1741 to 1768 (LDSSEPAENENKSNPFCDNQQSSPDPWT), 1782 to 1813 (VEKEKRSSPETGTTGDVAWQISPKASFPKNED), 2089 to 2114 (ILTHCEHDSNSQASDSPDICHDSEAK), 2173 to 2215 (YQAD…PDMA), 2240 to 2260 (QEPTPEGDGSWISDSFSPESQ), 2492 to 2542 (SDLP…KNED), 2589 to 2667 (TQLA…SELG), 2687 to 2710 (ALEEASGPVSQSQKSKSRGRAGPD), 2814 to 2833 (QSEGSILSDDNLDSPDEIDI), and 2841 to 2875 (PDEADSFEYTGHDPTANKDSGQESESIPEYTAEEE). The segment covering 503–512 (SGQSQQSSHS) has biased composition (low complexity). Positions 562–582 (SLVEHDEEFVQRQDSPRDNSE) are enriched in basic and acidic residues. Polar residues-rich tracts occupy residues 613-625 (MNSLVESSPSTEE) and 673-684 (SSEQESVFQSPE). Positions 685–699 (SWKEHKPSSIDRRAS) are enriched in basic and acidic residues. Positions 750–759 (LPNTSPQGTN) are enriched in polar residues. Polar residues predominate over residues 846-857 (SELLDNSPSEIN). Residues 865–876 (WGKKNNDSRDHI) are compositionally biased toward basic and acidic residues. The segment covering 881 to 894 (NPSSDLDHTWTNSK) has biased composition (polar residues). The segment covering 895 to 909 (PPKEDQNGLVDPKTR) has biased composition (basic and acidic residues). Positions 964–977 (DTNYSTSDSYTSPT) are enriched in low complexity. A compositionally biased stretch (basic and acidic residues) spans 980 to 1000 (GDEKETEHKPFAKEEGFESKD). Polar residues-rich tracts occupy residues 1001–1027 (GNSTAEETDIPPQSLQQSSRNRISSGP) and 1037–1048 (HTDNSSEINTTH). Basic and acidic residues-rich tracts occupy residues 1049 to 1062 (NLDENELKTEHTDG), 1192 to 1208 (SDEHTKDSAPSEHHTLN), 1282 to 1293 (HLDKQDTERETL), 1314 to 1339 (DPWKGHGDGQSESEKEAQGATDRGHL), and 1425 to 1434 (QPKDTHEKHL). Residues 1436 to 1450 (SQRNSGETTETSDGM) are compositionally biased toward polar residues. The span at 1537–1585 (SSEYTHSSASSPELNDSSVALSSWGQQPSSGYQEENQGNWSEQNHQESE) shows a compositional bias: polar residues. A compositionally biased stretch (acidic residues) spans 1687 to 1698 (SDDDSVGGEESI). Polar residues predominate over residues 1752 to 1768 (KSNPFCDNQQSSPDPWT). Basic and acidic residues-rich tracts occupy residues 2516–2542 (EKTIPTKEPEQIKSEYKEERCTEKNED) and 2604–2622 (NERKGLSAEKMSSKSDTRS). Residues 2623 to 2632 (SFESPAQDQS) show a composition bias toward polar residues. Acidic residues predominate over residues 2823-2833 (DNLDSPDEIDI). Residues 2895 to 3056 (DMKVIEPYRR…SIIKLDEELR (162 aa)) enclose the CRAL-TRIO domain.

Belongs to the PPase class C family. Prune subfamily. In terms of tissue distribution, a high level of expression seen in the nervous system (brain, cerebellum and spinal cord) as well as adrenal gland. Expressed at high levels in noneuroblastoma, rhabdomyosarcoma, melanoma and some osteosarcoma cell lines, whereas at only low levels in cancer cell lines of liver, breast, thyroid and colon. Expression is significantly higher in favorable tumors than aggressive ones.

The protein localises to the cytoplasm. May play an important role in regulating differentiation, survival and aggressiveness of the tumor cells. In Homo sapiens (Human), this protein is Protein prune homolog 2 (PRUNE2).